A 203-amino-acid polypeptide reads, in one-letter code: Large ribosomal subunit protein uL13 (203 aa).

Ala2 carries the post-translational modification N-acetylalanine. Citrulline is present on Arg59. At Ser77 the chain carries Phosphoserine. Arg140 is modified (citrulline). Lys191 carries the N6-acetyllysine modification.

This sequence belongs to the universal ribosomal protein uL13 family. Component of the 60S ribosome. Component of the GAIT complex. Interacts with EIF4G1. Phosphorylation at Ser-77 upon interferon-gamma treatment in monocytes involves a DAPK1-DAPK3 kinase cascade and is causing release from the ribosome, association with the GAIT complex and subsequent involvement in transcript-selective translation inhibition. Post-translationally, citrullinated by PADI4.

The protein localises to the cytoplasm. In terms of biological role, associated with ribosomes but is not required for canonical ribosome function and has extra-ribosomal functions. Component of the GAIT (gamma interferon-activated inhibitor of translation) complex which mediates interferon-gamma-induced transcript-selective translation inhibition in inflammation processes. Upon interferon-gamma activation and subsequent phosphorylation dissociates from the ribosome and assembles into the GAIT complex which binds to stem loop-containing GAIT elements in the 3'-UTR of diverse inflammatory mRNAs (such as ceruplasmin) and suppresses their translation. In the GAIT complex interacts with m7G cap-bound eIF4G at or near the eIF3-binding site and blocks the recruitment of the 43S ribosomal complex. Involved in methylation of rRNA. The polypeptide is Large ribosomal subunit protein uL13 (RPL13A) (Oryctolagus cuniculus (Rabbit)).